The sequence spans 497 residues: UDP-N-acetylmuramoyl-L-alanyl-D-glutamate--2,6-diaminopimelate ligase (497 aa).

A UDP-N-acetyl-alpha-D-muramoyl-L-alanyl-D-glutamate-binding site is contributed by serine 29. 116–122 lines the ATP pocket; the sequence is GTNGKTT. Residues asparagine 157, 158–159, serine 185, glutamine 191, and arginine 193 each bind UDP-N-acetyl-alpha-D-muramoyl-L-alanyl-D-glutamate; that span reads TT. Lysine 225 bears the N6-carboxylysine mark. Meso-2,6-diaminopimelate-binding positions include arginine 392, 416 to 419, glycine 467, and glutamate 471; that span reads DNPR. The short motif at 416–419 is the Meso-diaminopimelate recognition motif element; that stretch reads DNPR.

It belongs to the MurCDEF family. MurE subfamily. Requires Mg(2+) as cofactor. Carboxylation is probably crucial for Mg(2+) binding and, consequently, for the gamma-phosphate positioning of ATP.

It is found in the cytoplasm. The catalysed reaction is UDP-N-acetyl-alpha-D-muramoyl-L-alanyl-D-glutamate + meso-2,6-diaminopimelate + ATP = UDP-N-acetyl-alpha-D-muramoyl-L-alanyl-gamma-D-glutamyl-meso-2,6-diaminopimelate + ADP + phosphate + H(+). The protein operates within cell wall biogenesis; peptidoglycan biosynthesis. In terms of biological role, catalyzes the addition of meso-diaminopimelic acid to the nucleotide precursor UDP-N-acetylmuramoyl-L-alanyl-D-glutamate (UMAG) in the biosynthesis of bacterial cell-wall peptidoglycan. The protein is UDP-N-acetylmuramoyl-L-alanyl-D-glutamate--2,6-diaminopimelate ligase of Buchnera aphidicola subsp. Acyrthosiphon pisum (strain APS) (Acyrthosiphon pisum symbiotic bacterium).